The sequence spans 178 residues: uncharacterized protein (178 aa).

It belongs to the mimivirus L114/R131 family.

This is an uncharacterized protein from Acanthamoeba polyphaga mimivirus (APMV).